A 224-amino-acid chain; its full sequence is Urease accessory protein UreF (224 aa).

The protein belongs to the UreF family. As to quaternary structure, ureD, UreF and UreG form a complex that acts as a GTP-hydrolysis-dependent molecular chaperone, activating the urease apoprotein by helping to assemble the nickel containing metallocenter of UreC. The UreE protein probably delivers the nickel.

The protein localises to the cytoplasm. In terms of biological role, required for maturation of urease via the functional incorporation of the urease nickel metallocenter. The protein is Urease accessory protein UreF of Pseudomonas fluorescens (strain SBW25).